A 50-amino-acid chain; its full sequence is Sperm protamine P1 (50 aa).

2 cysteine pairs are disulfide-bonded: cysteine 7–cysteine 15 and cysteine 38–cysteine 46.

This sequence belongs to the protamine P1 family. As to quaternary structure, cross-linked by interchain disulfide bonds around the DNA-helix. As to expression, testis.

It localises to the nucleus. The protein resides in the chromosome. Functionally, protamines substitute for histones in the chromatin of sperm during the haploid phase of spermatogenesis. They compact sperm DNA into a highly condensed, stable and inactive complex. This is Sperm protamine P1 (PRM1) from Equus caballus (Horse).